Consider the following 433-residue polypeptide: Serine--tRNA ligase (433 aa).

235–237 (TSE) serves as a coordination point for L-serine. An ATP-binding site is contributed by 266 to 268 (RSE). An L-serine-binding site is contributed by Glu-289. 353-356 (EISS) lines the ATP pocket. Ser-388 serves as a coordination point for L-serine.

Belongs to the class-II aminoacyl-tRNA synthetase family. Type-1 seryl-tRNA synthetase subfamily. Homodimer. The tRNA molecule binds across the dimer.

Its subcellular location is the cytoplasm. It carries out the reaction tRNA(Ser) + L-serine + ATP = L-seryl-tRNA(Ser) + AMP + diphosphate + H(+). It catalyses the reaction tRNA(Sec) + L-serine + ATP = L-seryl-tRNA(Sec) + AMP + diphosphate + H(+). Its pathway is aminoacyl-tRNA biosynthesis; selenocysteinyl-tRNA(Sec) biosynthesis; L-seryl-tRNA(Sec) from L-serine and tRNA(Sec): step 1/1. In terms of biological role, catalyzes the attachment of serine to tRNA(Ser). Is also able to aminoacylate tRNA(Sec) with serine, to form the misacylated tRNA L-seryl-tRNA(Sec), which will be further converted into selenocysteinyl-tRNA(Sec). This Burkholderia ambifaria (strain ATCC BAA-244 / DSM 16087 / CCUG 44356 / LMG 19182 / AMMD) (Burkholderia cepacia (strain AMMD)) protein is Serine--tRNA ligase.